We begin with the raw amino-acid sequence, 255 residues long: MPRYKLTIEYDGGPFCGWQYQTNGPSVQGALEAAVKAICGDDVRVHGAGRTDAGVHALAQVAHCDIARHFMPDRLRDGLNAHLRPHPIGVLEAEIVPDSFEARFSARRRHYIYRIANRRANLAIDVGRVWRVPRPLDTEAMHAAAQRLLGKHDFTTFRDTECQAKSPEKTLDQLDVIRNGDNVSIITSARSYLHSQVRSMVGSLVWVGHGRWNADDLSGALAARRREACGPVAPPDGLYLARVDYEGSIPLRQDR.

Catalysis depends on Asp-52, which acts as the Nucleophile. Tyr-111 contacts substrate.

The protein belongs to the tRNA pseudouridine synthase TruA family. In terms of assembly, homodimer.

The enzyme catalyses uridine(38/39/40) in tRNA = pseudouridine(38/39/40) in tRNA. Formation of pseudouridine at positions 38, 39 and 40 in the anticodon stem and loop of transfer RNAs. The chain is tRNA pseudouridine synthase A from Nitrobacter winogradskyi (strain ATCC 25391 / DSM 10237 / CIP 104748 / NCIMB 11846 / Nb-255).